A 538-amino-acid polypeptide reads, in one-letter code: Telomerase Cajal body protein 1 (538 aa).

The disordered stretch occupies residues 1 to 53 (MKTSEERLVVPDSLSSDQAPAPVPQGSPVDENTDSEPVPQPCGGDDRSQVAAD). Ser27 and Ser87 each carry phosphoserine. The segment at 92–128 (EQELSENVSLPVEDTNQPELASGEDVEGVSEEPGPVD) is disordered. The span at 113–128 (SGEDVEGVSEEPGPVD) shows a compositional bias: acidic residues. 6 WD repeats span residues 154-194 (AHSE…YSAT), 210-255 (EGDT…LRAS), 260-301 (NHLD…RDCE), 311-352 (GQSG…ALLG), 353-393 (GHQG…HLLW), and 399-438 (VTTNQRIYFDLDPSGQFLVSGNTNGMVSVWDISGAFGDSS). Disordered stretches follow at residues 471-491 (QRMFPEPTNSGDEGEPEGDLP) and 509-538 (CGGGPDPSSPNDPQDEKGQGRAEGCGDGLI). Thr478 carries the post-translational modification Phosphothreonine. At Ser480 the chain carries Phosphoserine. Over residues 529–538 (RAEGCGDGLI) the composition is skewed to gly residues.

This sequence belongs to the TCAB1 family. In terms of assembly, component of the telomerase holoenzyme complex composed of one molecule of TERT, one molecule of WRAP53/TCAB1, two molecules of H/ACA ribonucleoprotein complex subunits DKC1, NOP10, NHP2 and GAR1, and a telomerase RNA template component (TERC). The telomerase holoenzyme complex is associated with TEP1, SMG6/EST1A and POT1. Interacts with the chaperonin-containing T-complex (TRiC) complex; which mediates the folding of WRAP53/TCAB1. Interacts with COIL. Interacts with SMN1. Interacts with RNF8. Interacts with histone H2AX. In terms of tissue distribution, preferentially expressed in testis.

It localises to the nucleus. Its subcellular location is the cajal body. The protein resides in the chromosome. The protein localises to the telomere. Its function is as follows. RNA chaperone that plays a key role in telomere maintenance and RNA localization to Cajal bodies. Specifically recognizes and binds the Cajal body box (CAB box) present in both small Cajal body RNAs (scaRNAs) and telomerase RNA template component (TERC). Essential component of the telomerase holoenzyme complex, a ribonucleoprotein complex essential for the replication of chromosome termini that elongates telomeres in most eukaryotes. In the telomerase holoenzyme complex, required to stimulate the catalytic activity of the complex. Acts by specifically binding the CAB box of the TERC RNA and controlling the folding of the CR4/CR5 region of the TERC RNA, a critical step for telomerase activity. In addition, also controls telomerase holoenzyme complex localization to Cajal body. During S phase, required for delivery of TERC to telomeres during S phase and for telomerase activity. In addition to its role in telomere maintenance, also required for Cajal body formation, probably by mediating localization of scaRNAs to Cajal bodies. Also plays a role in DNA repair: relocalizes to sites of DNA double-strand breaks in response to DNA damage and promotes the repair of DNA double-strand breaks. Acts by recruiting the ubiquitin ligase RNF8 to DNA breaks and promote both homologous recombination (HR) and non-homologous end joining (NHEJ). This chain is Telomerase Cajal body protein 1, found in Mesocricetus auratus (Golden hamster).